Reading from the N-terminus, the 704-residue chain is Pentatricopeptide repeat-containing protein At1g56690, mitochondrial (704 aa).

The transit peptide at 1–12 directs the protein to the mitochondrion; the sequence is MKRLKLILRRTY. 15 PPR repeats span residues 16–46, 47–81, 82–108, 109–143, 144–170, 171–205, 206–232, 233–267, 268–294, 295–329, 330–364, 365–395, 396–430, 431–465, and 467–497; these read TGVN…LQFK, AIGS…NVVS, WNGL…MPER, NVVS…NEVS, WTVM…MPVK, DVVA…NVVT, WTTM…MPEK, TEVS…PVIA, CNAM…MEDR, DNAT…GVRP, SFPS…QFDD, DVYV…FSSK, DIIM…GTMP, NKVT…FCVT, and TVEH…MTIK. The tract at residues 502–577 is type E motif; that stretch reads VWGALLGACK…FPGCSWIEVG (76 aa). Residues 578–609 are type E(+) motif; it reads KKVHMFTRGGIKNHPEQAMILMMLEKTDGLLR. The segment at 610–704 is type DYW motif; it reads EAGYSPDCSH…NGECSCRDYW (95 aa).

Belongs to the PPR family. PCMP-H subfamily.

The protein localises to the mitochondrion. The protein is Pentatricopeptide repeat-containing protein At1g56690, mitochondrial (PCMP-H69) of Arabidopsis thaliana (Mouse-ear cress).